The primary structure comprises 381 residues: V-type proton ATPase subunit C 1-B (381 aa).

Threonine 2 is modified (N-acetylthreonine).

The protein belongs to the V-ATPase C subunit family. As to quaternary structure, V-ATPase is a heteromultimeric enzyme made up of two complexes: the ATP-hydrolytic V1 complex and the proton translocation V0 complex. The V1 complex consists of three catalytic AB heterodimers that form a heterohexamer, three peripheral stalks each consisting of EG heterodimers, one central rotor including subunits D and F, and the regulatory subunits C and H. The proton translocation complex V0 consists of the proton transport subunit a, a ring of proteolipid subunits c9c'', rotary subunit d, subunits e and f, and two accessory subunits.

Subunit of the V1 complex of vacuolar(H+)-ATPase (V-ATPase), a multisubunit enzyme composed of a peripheral complex (V1) that hydrolyzes ATP and a membrane integral complex (V0) that translocates protons. V-ATPase is responsible for acidifying and maintaining the pH of intracellular compartments and in some cell types, is targeted to the plasma membrane, where it is responsible for acidifying the extracellular environment. Subunit C is necessary for the assembly of the catalytic sector of the enzyme and is likely to have a specific function in its catalytic activity. This is V-type proton ATPase subunit C 1-B (atp6v1c1b) from Danio rerio (Zebrafish).